A 377-amino-acid polypeptide reads, in one-letter code: dTDP-fucopyranose mutase (377 aa).

FAD contacts are provided by residues S12, 31–32, N39, 58–59, R348, and 355–360; these read DD, HI, and LDMDVC.

The protein belongs to the UDP-galactopyranose/dTDP-fucopyranose mutase family. It depends on FAD as a cofactor.

It catalyses the reaction dTDP-alpha-D-fucose = dTDP-alpha-D-fucofuranose. The protein operates within bacterial outer membrane biogenesis; LPS O-antigen biosynthesis. With respect to regulation, inhibited by Cu(2+), while other divalent cations such as Ca(2+), Co(2+), Fe(2+) and Mg(2+) have no obvious effects on enzyme activity. Catalyzes the conversion of dTDP-alpha-D-fucopyranose to dTDP-alpha-D-fucofuranose. This is a step in the biosynthesis of D-fucofuranose, a component of E.coli O52 O antigen. The protein is dTDP-fucopyranose mutase (fcf2) of Escherichia coli.